A 472-amino-acid polypeptide reads, in one-letter code: Membrane-bound lytic murein transglycosylase F (472 aa).

Positions 1–24 (MRLLVIFLLALLLMACKEAPKPLA) are cleaved as a signal peptide. A non-LT domain region spans residues 25–259 (DPRTTKEIIV…HLIDRYYGHA (235 aa)). Residues 260 to 472 (DRLKPVDVTT…NGFGNTLSQE (213 aa)) form an LT domain region. The active site involves E306.

This sequence in the N-terminal section; belongs to the bacterial solute-binding protein 3 family. It in the C-terminal section; belongs to the transglycosylase Slt family.

The protein localises to the cell outer membrane. It carries out the reaction Exolytic cleavage of the (1-&gt;4)-beta-glycosidic linkage between N-acetylmuramic acid (MurNAc) and N-acetylglucosamine (GlcNAc) residues in peptidoglycan, from either the reducing or the non-reducing ends of the peptidoglycan chains, with concomitant formation of a 1,6-anhydrobond in the MurNAc residue.. Its function is as follows. Murein-degrading enzyme that degrades murein glycan strands and insoluble, high-molecular weight murein sacculi, with the concomitant formation of a 1,6-anhydromuramoyl product. Lytic transglycosylases (LTs) play an integral role in the metabolism of the peptidoglycan (PG) sacculus. Their lytic action creates space within the PG sacculus to allow for its expansion as well as for the insertion of various structures such as secretion systems and flagella. The polypeptide is Membrane-bound lytic murein transglycosylase F (Methylobacillus flagellatus (strain ATCC 51484 / DSM 6875 / VKM B-1610 / KT)).